Consider the following 349-residue polypeptide: N-acetyl-gamma-glutamyl-phosphate reductase (349 aa).

The active site involves cysteine 149.

This sequence belongs to the NAGSA dehydrogenase family. Type 1 subfamily.

The protein localises to the cytoplasm. The catalysed reaction is N-acetyl-L-glutamate 5-semialdehyde + phosphate + NADP(+) = N-acetyl-L-glutamyl 5-phosphate + NADPH + H(+). It participates in amino-acid biosynthesis; L-arginine biosynthesis; N(2)-acetyl-L-ornithine from L-glutamate: step 3/4. Catalyzes the NADPH-dependent reduction of N-acetyl-5-glutamyl phosphate to yield N-acetyl-L-glutamate 5-semialdehyde. The chain is N-acetyl-gamma-glutamyl-phosphate reductase from Acinetobacter baumannii (strain ACICU).